Consider the following 502-residue polypeptide: Betaine aldehyde dehydrogenase, chloroplastic (502 aa).

The transit peptide at 1-7 (MAFPIPA) directs the protein to the chloroplast. NAD(+) is bound at residue 240–245 (GSSATG). The active-site Proton acceptor is E262. Residue C296 is the Nucleophile of the active site.

This sequence belongs to the aldehyde dehydrogenase family. As to quaternary structure, homodimer.

It localises to the plastid. The protein resides in the chloroplast. It catalyses the reaction betaine aldehyde + NAD(+) + H2O = glycine betaine + NADH + 2 H(+). It functions in the pathway amine and polyamine biosynthesis; betaine biosynthesis via choline pathway; betaine from betaine aldehyde: step 1/1. The chain is Betaine aldehyde dehydrogenase, chloroplastic from Atriplex hortensis (Mountain spinach).